The primary structure comprises 186 residues: Elongation factor P (186 aa).

The protein belongs to the elongation factor P family.

It localises to the cytoplasm. It participates in protein biosynthesis; polypeptide chain elongation. Functionally, involved in peptide bond synthesis. Stimulates efficient translation and peptide-bond synthesis on native or reconstituted 70S ribosomes in vitro. Probably functions indirectly by altering the affinity of the ribosome for aminoacyl-tRNA, thus increasing their reactivity as acceptors for peptidyl transferase. This chain is Elongation factor P, found in Beutenbergia cavernae (strain ATCC BAA-8 / DSM 12333 / CCUG 43141 / JCM 11478 / NBRC 16432 / NCIMB 13614 / HKI 0122).